The following is a 357-amino-acid chain: Dihydroorotate dehydrogenase (quinone) (357 aa).

Residues 66–70 and threonine 90 contribute to the FMN site; that span reads AGFDK. A substrate-binding site is contributed by lysine 70. 115–119 contributes to the substrate binding site; it reads NRMGF. FMN-binding residues include asparagine 143 and asparagine 176. Residue asparagine 176 coordinates substrate. Catalysis depends on serine 179, which acts as the Nucleophile. Residue asparagine 181 participates in substrate binding. Residues lysine 212 and threonine 240 each contribute to the FMN site. 241–242 contributes to the substrate binding site; it reads NT. FMN is bound by residues glycine 264, glycine 293, and 314 to 315; that span reads YT.

This sequence belongs to the dihydroorotate dehydrogenase family. Type 2 subfamily. As to quaternary structure, monomer. FMN is required as a cofactor.

The protein localises to the cell membrane. The catalysed reaction is (S)-dihydroorotate + a quinone = orotate + a quinol. It functions in the pathway pyrimidine metabolism; UMP biosynthesis via de novo pathway; orotate from (S)-dihydroorotate (quinone route): step 1/1. Catalyzes the conversion of dihydroorotate to orotate with quinone as electron acceptor. The chain is Dihydroorotate dehydrogenase (quinone) from Mycobacterium bovis (strain BCG / Pasteur 1173P2).